The sequence spans 357 residues: UPF0283 membrane protein BSUIS_A1077 (357 aa).

Positions 1 to 36 (MSDKTPRKPTAFRLEQPARVSAASEQEEPRHPRAVK) are disordered. A compositionally biased stretch (basic and acidic residues) spans 27 to 36 (EEPRHPRAVK). 2 consecutive transmembrane segments (helical) span residues 78-98 (ILFGALGILVSFAIGIWTEDL) and 109-129 (LGWTALGVAMVALAAFAAIIL).

It belongs to the UPF0283 family.

The protein resides in the cell inner membrane. The sequence is that of UPF0283 membrane protein BSUIS_A1077 from Brucella suis (strain ATCC 23445 / NCTC 10510).